We begin with the raw amino-acid sequence, 238 residues long: Ribonuclease PH (238 aa).

Phosphate-binding positions include Arg-86 and 124 to 126 (GTR).

It belongs to the RNase PH family. As to quaternary structure, homohexameric ring arranged as a trimer of dimers.

The enzyme catalyses tRNA(n+1) + phosphate = tRNA(n) + a ribonucleoside 5'-diphosphate. Its function is as follows. Phosphorolytic 3'-5' exoribonuclease that plays an important role in tRNA 3'-end maturation. Removes nucleotide residues following the 3'-CCA terminus of tRNAs; can also add nucleotides to the ends of RNA molecules by using nucleoside diphosphates as substrates, but this may not be physiologically important. Probably plays a role in initiation of 16S rRNA degradation (leading to ribosome degradation) during starvation. The protein is Ribonuclease PH of Shigella flexneri serotype 5b (strain 8401).